The chain runs to 233 residues: MNGRGFLIYNGGEKMKQKMIIYDTPAGPYPARVRIALAEKNMLSSVQFVRINLWKGEHKKPEFLAKNYSGTVPVLELDDGTLIAECTAITEYIDALDGTPTLTGKTPLEKGVIHMMNKRAELELLDPVSVYFHHATPGLGPEVELYQNKEWGLRQRDKALHGMHYFDTVLRERPYVAGDSFSMADITVIAGLIFAAIVKLQVPEECEALRAWYKRMQQRPSVKKLLEIRSKSS.

Residues 17 to 101 form the GST N-terminal domain; that stretch reads QKMIIYDTPA…YIDALDGTPT (85 aa). Residues tyrosine 29, histidine 58, valine 72, 85–86, and histidine 133 each bind glutathione; that span reads EC. Residues 106-233 form the GST C-terminal domain; the sequence is TPLEKGVIHM…KLLEIRSKSS (128 aa).

The protein belongs to the GST superfamily. As to quaternary structure, homodimer.

The catalysed reaction is RX + glutathione = an S-substituted glutathione + a halide anion + H(+). The protein is Glutathione S-transferase 2 (GTT2) of Saccharomyces cerevisiae (strain ATCC 204508 / S288c) (Baker's yeast).